A 293-amino-acid chain; its full sequence is Ribosomal protein L11 methyltransferase (293 aa).

Residues threonine 145, glycine 166, aspartate 188, and asparagine 230 each coordinate S-adenosyl-L-methionine.

Belongs to the methyltransferase superfamily. PrmA family.

The protein resides in the cytoplasm. It carries out the reaction L-lysyl-[protein] + 3 S-adenosyl-L-methionine = N(6),N(6),N(6)-trimethyl-L-lysyl-[protein] + 3 S-adenosyl-L-homocysteine + 3 H(+). Its function is as follows. Methylates ribosomal protein L11. This Sodalis glossinidius (strain morsitans) protein is Ribosomal protein L11 methyltransferase.